Consider the following 25-residue polypeptide: Chrysophsin-2 (25 aa).

The residue at position 25 (H25) is a Histidine amide.

As to expression, gill.

It is found in the secreted. Has antibacterial activity against Gram-positive bacteria B.subtilis ATCC 6633, L.garvieae ATCC 49156 and S.iniae F-8502, and Gram-negative bacteria E.coli WT-2, V.anguillarum ATCC 19264, V.penaeicida KHA, V.harveyi ATCC 14126, V.vulnificus ATCC 33148 and A.salmonicida NCMB 1102. Has hemolytic activity against human red blood cells. Seems to disrupt the membranes by adopting an alpha helical conformation. May play a significant role in innate host defense. This Pagrus major (Red sea bream) protein is Chrysophsin-2.